Here is a 432-residue protein sequence, read N- to C-terminus: 3-phosphoshikimate 1-carboxyvinyltransferase (432 aa).

Residues Lys22, Ser23, and Arg27 each coordinate 3-phosphoshikimate. Phosphoenolpyruvate is bound at residue Lys22. Phosphoenolpyruvate-binding residues include Gly96 and Arg127. Positions 173, 174, 175, 201, 316, 339, and 343 each coordinate 3-phosphoshikimate. Residue Gln175 participates in phosphoenolpyruvate binding. Asp316 (proton acceptor) is an active-site residue. Phosphoenolpyruvate is bound by residues Arg347, Arg391, and Lys416.

This sequence belongs to the EPSP synthase family. In terms of assembly, monomer.

The protein resides in the cytoplasm. The enzyme catalyses 3-phosphoshikimate + phosphoenolpyruvate = 5-O-(1-carboxyvinyl)-3-phosphoshikimate + phosphate. It functions in the pathway metabolic intermediate biosynthesis; chorismate biosynthesis; chorismate from D-erythrose 4-phosphate and phosphoenolpyruvate: step 6/7. Functionally, catalyzes the transfer of the enolpyruvyl moiety of phosphoenolpyruvate (PEP) to the 5-hydroxyl of shikimate-3-phosphate (S3P) to produce enolpyruvyl shikimate-3-phosphate and inorganic phosphate. In Actinobacillus pleuropneumoniae serotype 7 (strain AP76), this protein is 3-phosphoshikimate 1-carboxyvinyltransferase.